Here is a 379-residue protein sequence, read N- to C-terminus: Homoserine O-succinyltransferase (379 aa).

One can recognise an AB hydrolase-1 domain in the interval 51–360 (NAVLICHALS…DAPQGHDAFL (310 aa)). Ser157 functions as the Nucleophile in the catalytic mechanism. Substrate is bound at residue Arg227. Active-site residues include Asp323 and His356. Substrate is bound at residue Asp357.

The protein belongs to the AB hydrolase superfamily. MetX family. As to quaternary structure, homodimer.

The protein localises to the cytoplasm. It catalyses the reaction L-homoserine + succinyl-CoA = O-succinyl-L-homoserine + CoA. It functions in the pathway amino-acid biosynthesis; L-methionine biosynthesis via de novo pathway; O-succinyl-L-homoserine from L-homoserine: step 1/1. Transfers a succinyl group from succinyl-CoA to L-homoserine, forming succinyl-L-homoserine. The protein is Homoserine O-succinyltransferase of Pseudomonas fluorescens (strain SBW25).